The sequence spans 954 residues: Valine--tRNA ligase (954 aa).

The 'HIGH' region motif lies at 48 to 58 (PNVTGSLHMGH). Residues 560–564 (KMSKS) carry the 'KMSKS' region motif. Residue Lys563 participates in ATP binding. The stretch at 883 to 953 (AGFINKEAEL…IQEQYKAIEA (71 aa)) forms a coiled coil.

This sequence belongs to the class-I aminoacyl-tRNA synthetase family. ValS type 1 subfamily. As to quaternary structure, monomer.

Its subcellular location is the cytoplasm. The enzyme catalyses tRNA(Val) + L-valine + ATP = L-valyl-tRNA(Val) + AMP + diphosphate. In terms of biological role, catalyzes the attachment of valine to tRNA(Val). As ValRS can inadvertently accommodate and process structurally similar amino acids such as threonine, to avoid such errors, it has a 'posttransfer' editing activity that hydrolyzes mischarged Thr-tRNA(Val) in a tRNA-dependent manner. This is Valine--tRNA ligase from Haemophilus influenzae (strain 86-028NP).